The primary structure comprises 756 residues: Alpha-1,2-mannosyltransferase MNN26 (756 aa).

Residues Met-1 to His-10 lie on the Cytoplasmic side of the membrane. Residues Leu-11–Thr-31 traverse the membrane as a helical segment. The Extracellular portion of the chain corresponds to His-32–Ser-756. Over residues Leu-723–Ile-734 the composition is skewed to polar residues. A disordered region spans residues Leu-723–Ser-756.

It belongs to the MNN1/MNT family.

It localises to the golgi apparatus membrane. The protein operates within protein modification; protein glycosylation. Alpha-1,2-mannosyltransferase required for cell wall integrity. Responsible for addition of the first alpha-1,2-linked mannose to form the branches on the mannan backbone of oligosaccharides. Addition of alpha-1,2-mannose is required for stabilization of the alpha-1,6-mannose backbone and hence regulates mannan fibril length; and is important for both immune recognition and virulence. This chain is Alpha-1,2-mannosyltransferase MNN26 (MNN26), found in Candida albicans (strain SC5314 / ATCC MYA-2876) (Yeast).